A 397-amino-acid polypeptide reads, in one-letter code: LIM/homeobox protein Lhx9 (397 aa).

LIM zinc-binding domains are found at residues 69 to 130 (ALCA…RFSV) and 131 to 193 (QRCA…LLQG). 3 disordered regions span residues 248-272 (ENEA…RMRT), 330-364 (ENGG…TLTD), and 378-397 (SNMD…TNLF). The segment at residues 267-326 (TKRMRTSFKHHQLRTMKSYFAINHNPDAKDLKQLAQKTGLTKRVLQVWFQNARAKFRRNL) is a DNA-binding region (homeobox). Residues 353-364 (LTPPGTATTLTD) are compositionally biased toward low complexity.

In terms of assembly, interacts with LDB1 and LDB2.

The protein resides in the nucleus. Its function is as follows. Involved in gonadal development. The protein is LIM/homeobox protein Lhx9 (LHX9) of Homo sapiens (Human).